The primary structure comprises 179 residues: Replication restart protein DnaT (179 aa).

The tract at residues 154–179 (SNGGLPKRDVNTVSEPDSQIPPGFRG) is disordered.

The protein belongs to the DnaT family. As to quaternary structure, homooligomerizes. Interacts with PriB. Component of the replication restart primosome. Primosome assembly occurs via a 'hand-off' mechanism. PriA binds to replication forks, subsequently PriB then DnaT bind; DnaT then displaces ssDNA to generate the helicase loading substrate.

Involved in the restart of stalled replication forks, which reloads the replicative helicase on sites other than the origin of replication. Can function in multiple replication restart pathways. Displaces ssDNA from a PriB-ssDNA complex. Probably forms a spiral filament on ssDNA. In Escherichia coli O127:H6 (strain E2348/69 / EPEC), this protein is Replication restart protein DnaT.